Here is a 231-residue protein sequence, read N- to C-terminus: Ureidoacrylate amidohydrolase RutB (231 aa).

The Proton acceptor role is filled by aspartate 25. The active site involves lysine 134. Catalysis depends on cysteine 167, which acts as the Nucleophile.

It belongs to the isochorismatase family. RutB subfamily.

It carries out the reaction (Z)-3-ureidoacrylate + H2O + H(+) = (Z)-3-aminoacrylate + NH4(+) + CO2. The enzyme catalyses (Z)-3-ureidoacrylate + H2O = (Z)-3-aminoacrylate + carbamate + H(+). It catalyses the reaction (Z)-2-methylureidoacrylate + H2O + H(+) = (Z)-2-methylaminoacrylate + NH4(+) + CO2. Hydrolyzes ureidoacrylate to form aminoacrylate and carbamate. The carbamate hydrolyzes spontaneously, thereby releasing one of the nitrogen atoms of the pyrimidine ring as ammonia and one of its carbon atoms as CO2. The protein is Ureidoacrylate amidohydrolase RutB of Escherichia coli O18:K1:H7 (strain IHE3034 / ExPEC).